Consider the following 379-residue polypeptide: UDP-4-amino-4-deoxy-L-arabinose--oxoglutarate aminotransferase (379 aa).

Lysine 182 carries the N6-(pyridoxal phosphate)lysine modification.

The protein belongs to the DegT/DnrJ/EryC1 family. ArnB subfamily. As to quaternary structure, homodimer. Requires pyridoxal 5'-phosphate as cofactor.

The enzyme catalyses UDP-4-amino-4-deoxy-beta-L-arabinose + 2-oxoglutarate = UDP-beta-L-threo-pentopyranos-4-ulose + L-glutamate. It participates in nucleotide-sugar biosynthesis; UDP-4-deoxy-4-formamido-beta-L-arabinose biosynthesis; UDP-4-deoxy-4-formamido-beta-L-arabinose from UDP-alpha-D-glucuronate: step 2/3. It functions in the pathway bacterial outer membrane biogenesis; lipopolysaccharide biosynthesis. Functionally, catalyzes the conversion of UDP-4-keto-arabinose (UDP-Ara4O) to UDP-4-amino-4-deoxy-L-arabinose (UDP-L-Ara4N). The modified arabinose is attached to lipid A and is required for resistance to polymyxin and cationic antimicrobial peptides. This Escherichia coli (strain K12 / DH10B) protein is UDP-4-amino-4-deoxy-L-arabinose--oxoglutarate aminotransferase.